An 85-amino-acid chain; its full sequence is MNSLLMITACLVLFGTVWSEKGYLVHEDTGCRYKCTFSGENSYCDKECKSQGGDSGICQSKACYCQGLPEDTKTWPLIGKLCGRK.

An N-terminal signal peptide occupies residues 1–19 (MNSLLMITACLVLFGTVWS). Residues 20 to 83 (EKGYLVHEDT…TWPLIGKLCG (64 aa)) enclose the LCN-type CS-alpha/beta domain. Disulfide bonds link Cys-31–Cys-82, Cys-35–Cys-58, Cys-44–Cys-63, and Cys-48–Cys-65. Position 82 is a cysteine amide (Cys-82).

The protein belongs to the long (4 C-C) scorpion toxin superfamily. Sodium channel inhibitor family. Beta subfamily. In terms of tissue distribution, expressed by the venom gland.

Its subcellular location is the secreted. In terms of biological role, beta toxins bind voltage-independently at site-4 of sodium channels (Nav) and shift the voltage of activation toward more negative potentials thereby affecting sodium channel activation and promoting spontaneous and repetitive firing. The protein is Toxin CsE8 of Centruroides sculpturatus (Arizona bark scorpion).